The following is a 600-amino-acid chain: Novobiocin biosynthesis protein H (600 aa).

A disordered region spans residues Gly505–Gly526. Positions Gly526–Glu600 constitute a Carrier domain. Ser561 carries the O-(pantetheine 4'-phosphoryl)serine modification.

The protein belongs to the ATP-dependent AMP-binding enzyme family.

Its pathway is antibiotic biosynthesis; novobiocin biosynthesis. Its function is as follows. Together with NovI, involved in the formation of a beta-OH-Tyr intermediate in the novobiocin biosynthesis pathway, an aminocoumarin family antibiotic that targets bacterial DNA gyrases. The ATP-dependent AMP-binding region activates L-Tyr as L-tyrosyl-AMP and then transfers the L-tyrosyl group to the acyl carrier domain through thioester formation to form a tyrosyl-S intermediate that is covalently tethered to NovH (L-Tyr-S-NovH). This Streptomyces niveus (Streptomyces spheroides) protein is Novobiocin biosynthesis protein H (novH).